The following is a 270-amino-acid chain: Phosphonoacetaldehyde hydrolase (270 aa).

The active-site Nucleophile is the Asp11. Positions 11 and 13 each coordinate Mg(2+). The Schiff-base intermediate with substrate role is filled by Lys53. Residue Asp187 coordinates Mg(2+).

This sequence belongs to the HAD-like hydrolase superfamily. PhnX family. Homodimer. Mg(2+) serves as cofactor.

It carries out the reaction phosphonoacetaldehyde + H2O = acetaldehyde + phosphate + H(+). Functionally, involved in phosphonate degradation. The protein is Phosphonoacetaldehyde hydrolase of Salmonella choleraesuis (strain SC-B67).